The primary structure comprises 188 residues: UPF0301 protein XAC2918 (188 aa).

This sequence belongs to the UPF0301 (AlgH) family.

This is UPF0301 protein XAC2918 from Xanthomonas axonopodis pv. citri (strain 306).